A 341-amino-acid chain; its full sequence is GDP-fucose transporter 1 (341 aa).

10 consecutive transmembrane segments (helical) span residues 17 to 37, 41 to 61, 71 to 91, 103 to 123, 132 to 152, 156 to 176, 187 to 207, 231 to 251, 260 to 280, and 283 to 303; these read LVIG…LAIT, YPGL…YLLG, FTWD…LAIF, DTFI…DTVF, LTFL…ATDS, LTAY…MVYI, IWGL…VFWF, AFSS…FGFA, AFTV…VLIW, and HATP…VGYQ. Positions 316-341 are disordered; that stretch reads SEKDSEKGEEDEELTQLVPGKLASVV.

The protein belongs to the nucleotide-sugar transporter family. GDP-Mannose:GMP antiporter (GMA) (TC 2.A.7.13) subfamily. As to expression, ubiquitous.

It is found in the golgi apparatus membrane. Functionally, acts as the major nucleotide-sugar transporter for the import of GDP-Fucose into the Golgi lumen. Transports GDP-Fucose in a strict counter-exchange mode. Is required for proper plant growth and development. Also acts as a GDP-mannose transporter that may be involved in the import of GDP-mannose from the cytoplasm into the Golgi lumen. The sequence is that of GDP-fucose transporter 1 from Arabidopsis thaliana (Mouse-ear cress).